Here is a 102-residue protein sequence, read N- to C-terminus: ATP-dependent Clp protease adapter protein ClpS (102 aa).

The protein belongs to the ClpS family. As to quaternary structure, binds to the N-terminal domain of the chaperone ClpA.

Functionally, involved in the modulation of the specificity of the ClpAP-mediated ATP-dependent protein degradation. This chain is ATP-dependent Clp protease adapter protein ClpS, found in Shewanella oneidensis (strain ATCC 700550 / JCM 31522 / CIP 106686 / LMG 19005 / NCIMB 14063 / MR-1).